The primary structure comprises 501 residues: MSWAALLGLLAVLLLLLLLLSRRRARRPGEPPLDLGSIPWLGHALEFGKDAASFLTRMKEKHGDIFTVLVGGRYVTVLLDPHSYDTVVWDLRTRLDFHPYAIFLMERIFDLQLPNFNPSEEKARMKPTLMHKDLQALTEAMYTNLRTVLLGDSTEGGSGWQEKGLLEFSYSSLLSAGYLTLYGVEASPRTHESQALDRDHSADVFRTFRQLDLMLPKLARGSLSVGDKDHACSVKSRLWKLLSPAGLASRADRSSWLESYLRHLEEMGVSEDMQARALVLQLWATQGNMGPTAFWLLLFLLKNPEALDAVHAELKRIVWQAEKPVLQMTALPQKILDSMPVLDSVLNETLRLTAAPFITREVMADLALPMADRREFSLRRGDRLLLFPFLSPQKDPEIYTEPEVFKYNRFLNPDGSEKKDFYKDGKRLKNYNMPWGAGHNQCLGKSYAINSIKQFVVLLLTHFDLELVSEDTEVPEFDLSRYGFGLMQPEEDVPIRYRTRL.

Residues M1–S21 form a helical membrane-spanning segment. Substrate-binding positions include R107, L113, N288, T359–R360, and R383. C442 contributes to the heme binding site.

This sequence belongs to the cytochrome P450 family. Heme serves as cofactor.

The protein resides in the endoplasmic reticulum membrane. It catalyses the reaction prostaglandin H2 = prostaglandin I2. It carries out the reaction a hydroperoxyeicosatetraenoate = an oxoeicosatetraenoate + H2O. The catalysed reaction is (15S)-hydroperoxy-(5Z,8Z,11Z,13E)-eicosatetraenoate = 15-oxo-(5Z,8Z,11Z,13E)-eicosatetraenoate + H2O. The enzyme catalyses (15S)-hydroperoxy-(5Z,8Z,11Z,13E)-eicosatetraenoate + AH2 = (15S)-hydroxy-(5Z,8Z,11Z,13E)-eicosatetraenoate + A + H2O. In terms of biological role, catalyzes the biosynthesis and metabolism of eicosanoids. Catalyzes the isomerization of prostaglandin H2 to prostacyclin (= prostaglandin I2), a potent mediator of vasodilation and inhibitor of platelet aggregation. Additionally, displays dehydratase activity, toward hydroperoxyeicosatetraenoates (HPETEs), especially toward (15S)-hydroperoxy-(5Z,8Z,11Z,13E)-eicosatetraenoate (15(S)-HPETE). This chain is Prostacyclin synthase (Ptgis), found in Rattus norvegicus (Rat).